The primary structure comprises 280 residues: ATP synthase gamma chain (280 aa).

It belongs to the ATPase gamma chain family. As to quaternary structure, F-type ATPases have 2 components, CF(1) - the catalytic core - and CF(0) - the membrane proton channel. CF(1) has five subunits: alpha(3), beta(3), gamma(1), delta(1), epsilon(1). CF(0) has three main subunits: a, b and c.

It localises to the cell membrane. Produces ATP from ADP in the presence of a proton gradient across the membrane. The gamma chain is believed to be important in regulating ATPase activity and the flow of protons through the CF(0) complex. This Mycoplasma mycoides subsp. mycoides SC (strain CCUG 32753 / NCTC 10114 / PG1) protein is ATP synthase gamma chain.